Reading from the N-terminus, the 158-residue chain is Succinate dehydrogenase [ubiquinone] cytochrome b small subunit, mitochondrial (158 aa).

The N-terminal 55 residues, 1–55, are a transit peptide targeting the mitochondrion; sequence MALWRLSVLCGAREGRALFLRTPVVRPALVSAFLQDRPAQGWCGTQHIHLSPSHH. Residues 56-62 lie on the Mitochondrial matrix side of the membrane; sequence SGSKAAS. A helical membrane pass occupies residues 63 to 84; it reads LHWTGERVVSVLLLGLIPAAYL. Residues 85–89 are Mitochondrial intermembrane-facing; sequence NPCSA. A helical membrane pass occupies residues 90-110; sequence MDYSLAATLTLHSHWGIGQVV. Histidine 101 provides a ligand contact to heme b. Topologically, residues 111-119 are mitochondrial matrix; the sequence is TDYVHGDAV. Residue tyrosine 113 participates in a ubiquinone binding. Residues 120–141 traverse the membrane as a helical segment; it reads QKAAKTGLLVLSAFTFAGLCYF. Over 142-158 the chain is Mitochondrial intermembrane; the sequence is NYHDVGICKAVAMLWKL.

It belongs to the CybS family. As to quaternary structure, component of complex II composed of four subunits: the flavoprotein (FP) SDHA, iron-sulfur protein (IP) SDHB, and a cytochrome b560 composed of SDHC and SDHD.

Its subcellular location is the mitochondrion inner membrane. It functions in the pathway carbohydrate metabolism; tricarboxylic acid cycle. Functionally, membrane-anchoring subunit of succinate dehydrogenase (SDH) that is involved in complex II of the mitochondrial electron transport chain and is responsible for transferring electrons from succinate to ubiquinone (coenzyme Q). SDH also oxidizes malate to the non-canonical enol form of oxaloacetate, enol-oxaloacetate. Enol-oxaloacetate, which is a potent inhibitor of the succinate dehydrogenase activity, is further isomerized into keto-oxaloacetate. In Bos taurus (Bovine), this protein is Succinate dehydrogenase [ubiquinone] cytochrome b small subunit, mitochondrial (SDHD).